Here is a 379-residue protein sequence, read N- to C-terminus: Alcohol dehydrogenase class-3 (379 aa).

Residues Cys-47, His-69, Cys-99, Cys-102, Cys-105, Cys-113, and Cys-176 each contribute to the Zn(2+) site.

The protein belongs to the zinc-containing alcohol dehydrogenase family. Class-III subfamily. As to quaternary structure, homodimer. The cofactor is Zn(2+).

It is found in the cytoplasm. It catalyses the reaction a primary alcohol + NAD(+) = an aldehyde + NADH + H(+). The catalysed reaction is a secondary alcohol + NAD(+) = a ketone + NADH + H(+). It carries out the reaction S-(hydroxymethyl)glutathione + NADP(+) = S-formylglutathione + NADPH + H(+). The enzyme catalyses S-(hydroxymethyl)glutathione + NAD(+) = S-formylglutathione + NADH + H(+). Class-III ADH is remarkably ineffective in oxidizing ethanol, but it readily catalyzes the oxidation of long-chain primary alcohols and the oxidation of S-(hydroxymethyl) glutathione. The sequence is that of Alcohol dehydrogenase class-3 (adh5) from Dictyostelium discoideum (Social amoeba).